A 423-amino-acid chain; its full sequence is Histidine--tRNA ligase (423 aa).

Belongs to the class-II aminoacyl-tRNA synthetase family. Homodimer.

It is found in the cytoplasm. It catalyses the reaction tRNA(His) + L-histidine + ATP = L-histidyl-tRNA(His) + AMP + diphosphate + H(+). In Actinobacillus pleuropneumoniae serotype 7 (strain AP76), this protein is Histidine--tRNA ligase.